Reading from the N-terminus, the 511-residue chain is GMP synthase [glutamine-hydrolyzing] (511 aa).

The Glutamine amidotransferase type-1 domain occupies 5-195 (DIIVLDFGSQ…AKYICDCEST (191 aa)). The active-site Nucleophile is Cys82. Active-site residues include His169 and Glu171. Residues 196-386 (WNMGNFAKIK…LGLSPDLVYR (191 aa)) form the GMPS ATP-PPase domain. An ATP-binding site is contributed by 223 to 229 (SGGVDSS).

As to quaternary structure, homodimer.

The enzyme catalyses XMP + L-glutamine + ATP + H2O = GMP + L-glutamate + AMP + diphosphate + 2 H(+). Its pathway is purine metabolism; GMP biosynthesis; GMP from XMP (L-Gln route): step 1/1. Functionally, catalyzes the synthesis of GMP from XMP. The polypeptide is GMP synthase [glutamine-hydrolyzing] (Campylobacter hominis (strain ATCC BAA-381 / DSM 21671 / CCUG 45161 / LMG 19568 / NCTC 13146 / CH001A)).